Consider the following 205-residue polypeptide: Proteasome subunit beta type-3 (205 aa).

Residue Ser-2 is modified to N-acetylserine. At Lys-77 the chain carries N6-acetyllysine.

It belongs to the peptidase T1B family. In terms of assembly, the 26S proteasome consists of a 20S proteasome core and two 19S regulatory subunits. The 20S proteasome core is a barrel-shaped complex made of 28 subunits that are arranged in four stacked rings. The two outer rings are each formed by seven alpha subunits, and the two inner rings are formed by seven beta subunits. The proteolytic activity is exerted by three beta-subunits PSMB5, PSMB6 and PSMB7.

Its subcellular location is the cytoplasm. The protein localises to the nucleus. Non-catalytic component of the 20S core proteasome complex involved in the proteolytic degradation of most intracellular proteins. This complex plays numerous essential roles within the cell by associating with different regulatory particles. Associated with two 19S regulatory particles, forms the 26S proteasome and thus participates in the ATP-dependent degradation of ubiquitinated proteins. The 26S proteasome plays a key role in the maintenance of protein homeostasis by removing misfolded or damaged proteins that could impair cellular functions, and by removing proteins whose functions are no longer required. Associated with the PA200 or PA28, the 20S proteasome mediates ubiquitin-independent protein degradation. This type of proteolysis is required in several pathways including spermatogenesis (20S-PA200 complex) or generation of a subset of MHC class I-presented antigenic peptides (20S-PA28 complex). The polypeptide is Proteasome subunit beta type-3 (PSMB3) (Bos taurus (Bovine)).